Consider the following 123-residue polypeptide: Small ribosomal subunit protein uS13 (123 aa).

A compositionally biased stretch (basic residues) spans 99-113 (RGQRTHTNARTRKGG). The disordered stretch occupies residues 99-123 (RGQRTHTNARTRKGGSRLAVAAKKK).

It belongs to the universal ribosomal protein uS13 family. As to quaternary structure, part of the 30S ribosomal subunit. Forms a loose heterodimer with protein S19. Forms two bridges to the 50S subunit in the 70S ribosome.

In terms of biological role, located at the top of the head of the 30S subunit, it contacts several helices of the 16S rRNA. In the 70S ribosome it contacts the 23S rRNA (bridge B1a) and protein L5 of the 50S subunit (bridge B1b), connecting the 2 subunits; these bridges are implicated in subunit movement. Contacts the tRNAs in the A and P-sites. The sequence is that of Small ribosomal subunit protein uS13 from Anaplasma phagocytophilum (strain HZ).